We begin with the raw amino-acid sequence, 301 residues long: Acetylglutamate kinase (301 aa).

Substrate is bound by residues 68-69, R90, and N195; that span reads GG.

This sequence belongs to the acetylglutamate kinase family. ArgB subfamily.

Its subcellular location is the cytoplasm. The enzyme catalyses N-acetyl-L-glutamate + ATP = N-acetyl-L-glutamyl 5-phosphate + ADP. The protein operates within amino-acid biosynthesis; L-arginine biosynthesis; N(2)-acetyl-L-ornithine from L-glutamate: step 2/4. Catalyzes the ATP-dependent phosphorylation of N-acetyl-L-glutamate. In Pseudomonas aeruginosa (strain LESB58), this protein is Acetylglutamate kinase.